Here is a 498-residue protein sequence, read N- to C-terminus: Protein DETOXIFICATION 30 (498 aa).

A run of 12 helical transmembrane segments spans residues 64–86, 91–111, 136–156, 161–181, 197–217, 227–247, 277–297, 302–322, 349–369, 393–413, 419–439, and 447–467; these read YSLG…AAVS, VIAG…ETLC, VTAV…AFIG, ISSA…AYAV, VMAA…WFVI, LAVV…VYIF, AVML…AGYL, ISVA…MIAI, LVAV…LLIF, ILAV…VAVG, VVAY…GLLL, and VMGI…VLTW.

This sequence belongs to the multi antimicrobial extrusion (MATE) (TC 2.A.66.1) family.

The protein localises to the membrane. The sequence is that of Protein DETOXIFICATION 30 from Arabidopsis thaliana (Mouse-ear cress).